Reading from the N-terminus, the 1053-residue chain is SPX and EXS domain-containing protein 2 (1053 aa).

Residues 1-339 form the SPX domain; sequence MKFRDYLKDN…PRIAKECRKY (339 aa). Positions 54–88 are enriched in low complexity; sequence NNINKNNNNNNNNNNNNNNNNNNNNNINNNNNNNN. A disordered region spans residues 54–137; the sequence is NNINKNNNNN…VGDEDGGDDD (84 aa). Residues 95–112 show a composition bias toward polar residues; it reads QTNSNNISIPNQMAPQES. Positions 113–122 are enriched in acidic residues; the sequence is SGEDEDDENE. Transmembrane regions (helical) follow at residues 391-411, 427-447, 476-496, 510-530, 561-581, 595-615, 630-652, 666-686, 712-732, and 745-765; these read YIIGFLIGASAILIAQVIFKF, MAWLLFRISSLPIILGTLFAL, YLMYGMIFVTMWLVVFNVYVD, YLLLIPLLFILGSIFFLILPF, FFMSVQLLCLGEFLFNMQQIV, GVCFKHKAVIFPILSVLPFYW, FFPHITSAIRSTFSIVTNILLWV, ILWFIINVVGTVYKLYADFTV, WVYYVAMSFDTFFRFVWLIVF, and PLFLFWFSLSEIAWAAQFIFF. Positions 596–798 constitute an EXS domain; it reads VCFKHKAVIF…SQDYKNYMEE (203 aa). Disordered stretches follow at residues 799–871 and 1023–1053; these read KKSR…VDDE and HPELNSSNRNQVDPNSPMNRLITRADLNKSR. Residues 842-853 show a composition bias toward acidic residues; the sequence is DDDDDDESIDSD. The span at 1023 to 1040 shows a compositional bias: polar residues; the sequence is HPELNSSNRNQVDPNSPM.

Belongs to the SYG1 (TC 2.A.94) family.

The protein localises to the membrane. The polypeptide is SPX and EXS domain-containing protein 2 (Dictyostelium discoideum (Social amoeba)).